The chain runs to 332 residues: Ketol-acid reductoisomerase (NADP(+)) (332 aa).

The region spanning methionine 1 to threonine 182 is the KARI N-terminal Rossmann domain. NADP(+) is bound by residues tyrosine 25–glutamine 28, lysine 49, serine 51, and aspartate 83–glutamine 86. The active site involves histidine 108. Glycine 134 contacts NADP(+). One can recognise a KARI C-terminal knotted domain in the interval threonine 183–leucine 328. Mg(2+) contacts are provided by aspartate 191, glutamate 195, glutamate 227, and glutamate 231. Serine 252 contacts substrate.

It belongs to the ketol-acid reductoisomerase family. Requires Mg(2+) as cofactor.

The catalysed reaction is (2R)-2,3-dihydroxy-3-methylbutanoate + NADP(+) = (2S)-2-acetolactate + NADPH + H(+). It catalyses the reaction (2R,3R)-2,3-dihydroxy-3-methylpentanoate + NADP(+) = (S)-2-ethyl-2-hydroxy-3-oxobutanoate + NADPH + H(+). It participates in amino-acid biosynthesis; L-isoleucine biosynthesis; L-isoleucine from 2-oxobutanoate: step 2/4. The protein operates within amino-acid biosynthesis; L-valine biosynthesis; L-valine from pyruvate: step 2/4. Functionally, involved in the biosynthesis of branched-chain amino acids (BCAA). Catalyzes an alkyl-migration followed by a ketol-acid reduction of (S)-2-acetolactate (S2AL) to yield (R)-2,3-dihydroxy-isovalerate. In the isomerase reaction, S2AL is rearranged via a Mg-dependent methyl migration to produce 3-hydroxy-3-methyl-2-ketobutyrate (HMKB). In the reductase reaction, this 2-ketoacid undergoes a metal-dependent reduction by NADPH to yield (R)-2,3-dihydroxy-isovalerate. The protein is Ketol-acid reductoisomerase (NADP(+)) of Methanothrix thermoacetophila (strain DSM 6194 / JCM 14653 / NBRC 101360 / PT) (Methanosaeta thermophila).